The sequence spans 181 residues: Oligoribonuclease (181 aa).

Positions 8–171 (LIWVDLEMTG…DDIRESIAEL (164 aa)) constitute an Exonuclease domain. Y129 is a catalytic residue.

This sequence belongs to the oligoribonuclease family.

The protein localises to the cytoplasm. Functionally, 3'-to-5' exoribonuclease specific for small oligoribonucleotides. The chain is Oligoribonuclease from Vibrio campbellii (strain ATCC BAA-1116).